The primary structure comprises 142 residues: Nucleoside diphosphate kinase (142 aa).

ATP is bound by residues lysine 11, phenylalanine 59, arginine 87, threonine 93, arginine 104, and asparagine 114. The active-site Pros-phosphohistidine intermediate is histidine 117.

The protein belongs to the NDK family. In terms of assembly, homotetramer. Mg(2+) serves as cofactor.

The protein resides in the cytoplasm. The catalysed reaction is a 2'-deoxyribonucleoside 5'-diphosphate + ATP = a 2'-deoxyribonucleoside 5'-triphosphate + ADP. It carries out the reaction a ribonucleoside 5'-diphosphate + ATP = a ribonucleoside 5'-triphosphate + ADP. Functionally, major role in the synthesis of nucleoside triphosphates other than ATP. The ATP gamma phosphate is transferred to the NDP beta phosphate via a ping-pong mechanism, using a phosphorylated active-site intermediate. This is Nucleoside diphosphate kinase from Pectobacterium carotovorum subsp. carotovorum (strain PC1).